The chain runs to 483 residues: Zinc metalloproteinase/disintegrin (483 aa).

A signal peptide spans 1 to 20 (MIQVLLVTVCLAVFPYQGSS). Residues 21–190 (IILESGNVND…KASQLYLTPE (170 aa)) constitute a propeptide that is removed on maturation. The Peptidase M12B domain occupies 197–395 (RYVKLAIVVD…YKPQCILNAP (199 aa)). 3 cysteine pairs are disulfide-bonded: Cys308/Cys390, Cys352/Cys374, and Cys354/Cys357. Residue His333 participates in Zn(2+) binding. Glu334 is an active-site residue. The Zn(2+) site is built by His337 and His343. A propeptide spanning residues 396-411 (LRTDTVSTPVSGNELL) is cleaved from the precursor. The 81-residue stretch at 403 to 483 (TPVSGNELLE…SDDCPRWNDL (81 aa)) folds into the Disintegrin domain. Disulfide bonds link Cys417–Cys432, Cys419–Cys427, Cys426–Cys449, Cys440–Cys446, Cys445–Cys470, and Cys458–Cys477. A Cell attachment site motif is present at residues 462-464 (RGD).

Belongs to the venom metalloproteinase (M12B) family. P-II subfamily. P-IIa sub-subfamily. Monomer. It depends on Zn(2+) as a cofactor. In terms of tissue distribution, expressed by the venom gland.

It is found in the secreted. In terms of biological role, impairs hemostasis in the envenomed animal. Functionally, inhibits ADP- and collagen-induced human platelet aggregation with IC(50) of 123 and 135 nM, respectively. Inhibits sperm-egg binding in a concentration-dependent manner, but has no effect on the fusion of sperm-egg. This is Zinc metalloproteinase/disintegrin from Protobothrops jerdonii (Jerdon's pitviper).